Reading from the N-terminus, the 633-residue chain is Molybdenum cofactor biosynthesis protein 1 (633 aa).

A molybdenum cofactor biosynthesis protein A region spans residues Met-1 to Ile-380. Phosphoserine is present on Ser-61. In terms of domain architecture, Radical SAM core spans Ser-61–Arg-295. Residue Arg-70 participates in GTP binding. [4Fe-4S] cluster-binding residues include Cys-77 and Cys-81. Tyr-83 serves as a coordination point for S-adenosyl-L-methionine. Cys-84 serves as a coordination point for [4Fe-4S] cluster. Arg-120 contacts GTP. Gly-124 contributes to the S-adenosyl-L-methionine binding site. Thr-151 lines the GTP pocket. Ser-175 contacts S-adenosyl-L-methionine. Residue Lys-195 is modified to N6-acetyllysine. Lys-212 is a binding site for GTP. Met-246 is an S-adenosyl-L-methionine binding site. [4Fe-4S] cluster contacts are provided by Cys-309 and Cys-312. Arg-314–Arg-316 provides a ligand contact to GTP. Cys-326 contacts [4Fe-4S] cluster. The tract at residues Val-410–Thr-633 is molybdenum cofactor biosynthesis protein C. A disordered region spans residues Ser-446–Thr-480. At Lys-525 the chain carries N6-acetyllysine. Asp-603 functions as the For molybdenum cofactor biosynthesis protein C activity in the catalytic mechanism.

The protein in the C-terminal section; belongs to the MoaC family. This sequence in the N-terminal section; belongs to the radical SAM superfamily. MoaA family. In terms of assembly, isoform MOCS1A and isoform MOCS1B probably form a heterooligomer. [4Fe-4S] cluster is required as a cofactor.

The enzyme catalyses GTP + AH2 + S-adenosyl-L-methionine = (8S)-3',8-cyclo-7,8-dihydroguanosine 5'-triphosphate + 5'-deoxyadenosine + L-methionine + A + H(+). The catalysed reaction is (8S)-3',8-cyclo-7,8-dihydroguanosine 5'-triphosphate = cyclic pyranopterin phosphate + diphosphate. The protein operates within cofactor biosynthesis; molybdopterin biosynthesis. Functionally, isoform MOCS1A and isoform MOCS1B probably form a complex that catalyzes the conversion of 5'-GTP to cyclic pyranopterin monophosphate (cPMP). MOCS1A catalyzes the cyclization of GTP to (8S)-3',8-cyclo-7,8-dihydroguanosine 5'-triphosphate and MOCS1B catalyzes the subsequent conversion of (8S)-3',8-cyclo-7,8-dihydroguanosine 5'-triphosphate to cPMP. In Bos taurus (Bovine), this protein is Molybdenum cofactor biosynthesis protein 1 (MOCS1).